Reading from the N-terminus, the 20-residue chain is DnaJ homolog subfamily C member 1 (20 aa).

The Lumenal segment spans residues 1-20 (WESGDLELFDLVEEVXLNFY). Residues 18-20 (NFY) form the J domain.

Interacts (via SANT 2 domain) with SERPINA3; the interaction delays the formation of the covalent inhibitory complex SERPINA3-chymotrypsin, but does not alter the catalytic activity of SERPINA3. Interacts (via SANT 2 domain) with ITIH4 (via C-terminus); the interaction protects ITIH4 against in vitro cleavage by kallikrein. Interacts (via J domain) with HSPA5. Interacts (via cytosolic domain) with ribosomes.

The protein localises to the endoplasmic reticulum membrane. Its subcellular location is the nucleus membrane. It localises to the microsome membrane. This Canis lupus familiaris (Dog) protein is DnaJ homolog subfamily C member 1 (DNAJC1).